Reading from the N-terminus, the 291-residue chain is Ribosomal RNA small subunit methyltransferase H (291 aa).

Residues 36–38 (GGH), Asp-55, Leu-88, Asp-102, and Gln-109 each bind S-adenosyl-L-methionine. The segment at 268-291 (KPTQEETKNNPRARSAKLRVAERI) is disordered.

Belongs to the methyltransferase superfamily. RsmH family.

It localises to the cytoplasm. It carries out the reaction cytidine(1402) in 16S rRNA + S-adenosyl-L-methionine = N(4)-methylcytidine(1402) in 16S rRNA + S-adenosyl-L-homocysteine + H(+). Specifically methylates the N4 position of cytidine in position 1402 (C1402) of 16S rRNA. The chain is Ribosomal RNA small subunit methyltransferase H from Thermosipho melanesiensis (strain DSM 12029 / CIP 104789 / BI429).